A 426-amino-acid chain; its full sequence is Glutamyl-tRNA reductase (426 aa).

Substrate-binding positions include Thr-49–Arg-52, Ser-101, Glu-106–Gln-108, and Gln-112. Cys-50 (nucleophile) is an active-site residue. Gly-181–Ile-186 contacts NADP(+). Positions Asp-404–Arg-426 are disordered.

It belongs to the glutamyl-tRNA reductase family. As to quaternary structure, homodimer.

It carries out the reaction (S)-4-amino-5-oxopentanoate + tRNA(Glu) + NADP(+) = L-glutamyl-tRNA(Glu) + NADPH + H(+). Its pathway is porphyrin-containing compound metabolism; protoporphyrin-IX biosynthesis; 5-aminolevulinate from L-glutamyl-tRNA(Glu): step 1/2. Functionally, catalyzes the NADPH-dependent reduction of glutamyl-tRNA(Glu) to glutamate 1-semialdehyde (GSA). In Xanthomonas campestris pv. phaseoli, this protein is Glutamyl-tRNA reductase.